The primary structure comprises 296 residues: Elongation factor Ts (296 aa).

Residues 82–85 (TDFV) form an involved in Mg(2+) ion dislocation from EF-Tu region.

It belongs to the EF-Ts family.

The protein localises to the cytoplasm. In terms of biological role, associates with the EF-Tu.GDP complex and induces the exchange of GDP to GTP. It remains bound to the aminoacyl-tRNA.EF-Tu.GTP complex up to the GTP hydrolysis stage on the ribosome. The chain is Elongation factor Ts from Coxiella burnetii (strain CbuK_Q154) (Coxiella burnetii (strain Q154)).